We begin with the raw amino-acid sequence, 369 residues long: Protein-glutamate methylesterase/protein-glutamine glutaminase 1 (369 aa).

Residues 11–128 (RVLIVDDSAA…DLERQEASIR (118 aa)) enclose the Response regulatory domain. Asp-62 bears the 4-aspartylphosphate mark. The interval 136-168 (ATETTRRRSQPEPRPLAPGPKLTADEILPARPP) is disordered. The region spanning 170–358 (PVPETMPVVC…LDRLAARIME (189 aa)) is the CheB-type methylesterase domain. Residues Ser-183, His-209, and Asp-305 contribute to the active site.

It belongs to the CheB family. Post-translationally, phosphorylated by CheA. Phosphorylation of the N-terminal regulatory domain activates the methylesterase activity.

The protein localises to the cytoplasm. The catalysed reaction is [protein]-L-glutamate 5-O-methyl ester + H2O = L-glutamyl-[protein] + methanol + H(+). It catalyses the reaction L-glutaminyl-[protein] + H2O = L-glutamyl-[protein] + NH4(+). Functionally, involved in chemotaxis. Part of a chemotaxis signal transduction system that modulates chemotaxis in response to various stimuli. Catalyzes the demethylation of specific methylglutamate residues introduced into the chemoreceptors (methyl-accepting chemotaxis proteins or MCP) by CheR. Also mediates the irreversible deamidation of specific glutamine residues to glutamic acid. The polypeptide is Protein-glutamate methylesterase/protein-glutamine glutaminase 1 (Cereibacter sphaeroides (strain ATCC 17023 / DSM 158 / JCM 6121 / CCUG 31486 / LMG 2827 / NBRC 12203 / NCIMB 8253 / ATH 2.4.1.) (Rhodobacter sphaeroides)).